Consider the following 53-residue polypeptide: Conotoxin Cal9.2e (53 aa).

A propeptide spanning residues 1-6 (KKGVTQ) is cleaved from the precursor. 3 cysteine pairs are disulfide-bonded: C15-C32, C20-C42, and C22-C47.

Expressed by the venom duct.

Its subcellular location is the secreted. Functionally, probable neurotoxin with unknown target. Possibly targets ion channels. The protein is Conotoxin Cal9.2e of Californiconus californicus (California cone).